Consider the following 239-residue polypeptide: Probable transcriptional regulatory protein VC_A0006 (239 aa).

This sequence belongs to the TACO1 family.

The protein localises to the cytoplasm. This Vibrio cholerae serotype O1 (strain ATCC 39315 / El Tor Inaba N16961) protein is Probable transcriptional regulatory protein VC_A0006.